A 446-amino-acid polypeptide reads, in one-letter code: 5-methylthioadenosine/S-adenosylhomocysteine deaminase (446 aa).

H72 and H74 together coordinate Zn(2+). Substrate is bound by residues E101 and H194. H221 provides a ligand contact to Zn(2+). Substrate-binding residues include E224 and D309. D309 serves as a coordination point for Zn(2+).

The protein belongs to the metallo-dependent hydrolases superfamily. MTA/SAH deaminase family. Zn(2+) is required as a cofactor.

It carries out the reaction S-adenosyl-L-homocysteine + H2O + H(+) = S-inosyl-L-homocysteine + NH4(+). The enzyme catalyses S-methyl-5'-thioadenosine + H2O + H(+) = S-methyl-5'-thioinosine + NH4(+). Catalyzes the deamination of 5-methylthioadenosine and S-adenosyl-L-homocysteine into 5-methylthioinosine and S-inosyl-L-homocysteine, respectively. Is also able to deaminate adenosine. The protein is 5-methylthioadenosine/S-adenosylhomocysteine deaminase of Saccharophagus degradans (strain 2-40 / ATCC 43961 / DSM 17024).